The following is a 75-amino-acid chain: Cytochrome c oxidase subunit 6C (75 aa).

Over 1-13 the chain is Mitochondrial matrix; the sequence is MASEVLVKPQMRG. Residues 14–54 form a helical membrane-spanning segment; sequence LLARRLRIHMVGAFLVSLGVAALYKFGVAEPRKKAYADFYK. The Mitochondrial intermembrane segment spans residues 55-75; sequence NYSAEKDFEEMKKAGLFRSIK.

It belongs to the cytochrome c oxidase subunit 6c family. In terms of assembly, component of the cytochrome c oxidase (complex IV, CIV), a multisubunit enzyme composed of 14 subunits. The complex is composed of a catalytic core of 3 subunits MT-CO1, MT-CO2 and MT-CO3, encoded in the mitochondrial DNA, and 11 supernumerary subunits COX4I, COX5A, COX5B, COX6A, COX6B, COX6C, COX7A, COX7B, COX7C, COX8 and NDUFA4, which are encoded in the nuclear genome. The complex exists as a monomer or a dimer and forms supercomplexes (SCs) in the inner mitochondrial membrane with NADH-ubiquinone oxidoreductase (complex I, CI) and ubiquinol-cytochrome c oxidoreductase (cytochrome b-c1 complex, complex III, CIII), resulting in different assemblies (supercomplex SCI(1)III(2)IV(1) and megacomplex MCI(2)III(2)IV(2)).

Its subcellular location is the mitochondrion inner membrane. It functions in the pathway energy metabolism; oxidative phosphorylation. In terms of biological role, component of the cytochrome c oxidase, the last enzyme in the mitochondrial electron transport chain which drives oxidative phosphorylation. The respiratory chain contains 3 multisubunit complexes succinate dehydrogenase (complex II, CII), ubiquinol-cytochrome c oxidoreductase (cytochrome b-c1 complex, complex III, CIII) and cytochrome c oxidase (complex IV, CIV), that cooperate to transfer electrons derived from NADH and succinate to molecular oxygen, creating an electrochemical gradient over the inner membrane that drives transmembrane transport and the ATP synthase. Cytochrome c oxidase is the component of the respiratory chain that catalyzes the reduction of oxygen to water. Electrons originating from reduced cytochrome c in the intermembrane space (IMS) are transferred via the dinuclear copper A center (CU(A)) of subunit 2 and heme A of subunit 1 to the active site in subunit 1, a binuclear center (BNC) formed by heme A3 and copper B (CU(B)). The BNC reduces molecular oxygen to 2 water molecules using 4 electrons from cytochrome c in the IMS and 4 protons from the mitochondrial matrix. In Plecturocebus donacophilus (Bolivian gray titi monkey), this protein is Cytochrome c oxidase subunit 6C (COX6C).